A 370-amino-acid chain; its full sequence is Propane 2-monooxygenase, reductase component (370 aa).

Positions 1–14 are enriched in basic residues; the sequence is MAPRPLRRHPPLHH. The interval 1–21 is disordered; that stretch reads MAPRPLRRHPPLHHSFHESRR. Positions 28 to 118 constitute a 2Fe-2S ferredoxin-type domain; that stretch reads HRINFEPVDI…DCTIELLNFD (91 aa). 4 residues coordinate [2Fe-2S] cluster: Cys-62, Cys-67, Cys-70, and Cys-102. In terms of domain architecture, FAD-binding FR-type spans 128-229; sequence IQDVRTRVTR…TGPYGSFTIK (102 aa).

This sequence belongs to the TmoA/XamoA family. As to quaternary structure, the propane 2-monooxygenase multicomponent enzyme system is composed of an electron transfer component and a monooxygenase component interacting with the effector protein PrmD. The electron transfer component is composed of a reductase (PrmB), and the monooxygenase component is formed by a large subunit (PrmA) and a small subunit (PrmC). FAD serves as cofactor. Requires [2Fe-2S] cluster as cofactor.

Its function is as follows. Reductase component of the propane 2-monooxygenase multicomponent enzyme system which is involved in the degradation of propane via the O2-dependent hydroxylation of propane. Reductase catalyzes the transfer of electrons from NADH or NADPH to monooxygenase. This Rhodococcus jostii (strain RHA1) protein is Propane 2-monooxygenase, reductase component.